Here is a 468-residue protein sequence, read N- to C-terminus: uncharacterized protein (468 aa).

One can recognise a TRAM domain in the interval 3-61; sequence TFANGMTLDVTVDALAPGGKAVCRHEGRVIFVDRGLPGQQLHVRLTTVRKRFAEAECLA. The [4Fe-4S] cluster site is built by Cys74, Cys80, Cys83, and Cys162. 4 residues coordinate S-adenosyl-L-methionine: Gln288, Tyr317, Glu338, and Asp389. The active-site Nucleophile is the Cys416.

It belongs to the class I-like SAM-binding methyltransferase superfamily. RNA M5U methyltransferase family.

This is an uncharacterized protein from Nitratidesulfovibrio vulgaris (strain ATCC 29579 / DSM 644 / CCUG 34227 / NCIMB 8303 / VKM B-1760 / Hildenborough) (Desulfovibrio vulgaris).